Here is a 232-residue protein sequence, read N- to C-terminus: Ubiquinone biosynthesis O-methyltransferase (232 aa).

Arg-36, Gly-55, Asp-76, and Met-120 together coordinate S-adenosyl-L-methionine.

This sequence belongs to the methyltransferase superfamily. UbiG/COQ3 family.

The enzyme catalyses a 3-demethylubiquinol + S-adenosyl-L-methionine = a ubiquinol + S-adenosyl-L-homocysteine + H(+). It catalyses the reaction a 3-(all-trans-polyprenyl)benzene-1,2-diol + S-adenosyl-L-methionine = a 2-methoxy-6-(all-trans-polyprenyl)phenol + S-adenosyl-L-homocysteine + H(+). It functions in the pathway cofactor biosynthesis; ubiquinone biosynthesis. Functionally, O-methyltransferase that catalyzes the 2 O-methylation steps in the ubiquinone biosynthetic pathway. The chain is Ubiquinone biosynthesis O-methyltransferase from Chromobacterium violaceum (strain ATCC 12472 / DSM 30191 / JCM 1249 / CCUG 213 / NBRC 12614 / NCIMB 9131 / NCTC 9757 / MK).